The primary structure comprises 175 residues: Bifunctional protein PyrR (175 aa).

The short motif at 98-110 (VIIIDDVLYTGRT) is the PRPP-binding element.

The protein belongs to the purine/pyrimidine phosphoribosyltransferase family. PyrR subfamily. In terms of assembly, homodimer and homohexamer; in equilibrium.

It carries out the reaction UMP + diphosphate = 5-phospho-alpha-D-ribose 1-diphosphate + uracil. In terms of biological role, regulates transcriptional attenuation of the pyrimidine nucleotide (pyr) operon by binding in a uridine-dependent manner to specific sites on pyr mRNA. This disrupts an antiterminator hairpin in the RNA and favors formation of a downstream transcription terminator, leading to a reduced expression of downstream genes. Functionally, also displays a weak uracil phosphoribosyltransferase activity which is not physiologically significant. In Staphylococcus aureus (strain bovine RF122 / ET3-1), this protein is Bifunctional protein PyrR.